The primary structure comprises 88 residues: Sec-independent protein translocase protein TatA (88 aa).

The helical transmembrane segment at 1–21 threads the bilayer; the sequence is MGSIGWAQLLIIAVIVVLLFG. A disordered region spans residues 41–88; sequence KAMGDDSQTPPTNVDKTSNDADFAKSITEKQQPVAKAEESKSHEKEQG. Polar residues predominate over residues 46–56; it reads DSQTPPTNVDK. Basic and acidic residues predominate over residues 76 to 88; it reads KAEESKSHEKEQG.

It belongs to the TatA/E family. The Tat system comprises two distinct complexes: a TatABC complex, containing multiple copies of TatA, TatB and TatC subunits, and a separate TatA complex, containing only TatA subunits. Substrates initially bind to the TatABC complex, which probably triggers association of the separate TatA complex to form the active translocon.

Its subcellular location is the cell inner membrane. Functionally, part of the twin-arginine translocation (Tat) system that transports large folded proteins containing a characteristic twin-arginine motif in their signal peptide across membranes. TatA could form the protein-conducting channel of the Tat system. This chain is Sec-independent protein translocase protein TatA, found in Yersinia pestis.